Consider the following 622-residue polypeptide: Prolactin receptor (622 aa).

An N-terminal signal peptide occupies residues 1–24 (MKENVASATVFTLLLFLNTCLLNG). Residues 25–234 (QLPPGKPEIF…QIPSDFTMND (210 aa)) are Extracellular-facing. Fibronectin type-III domains lie at 27–128 (PPGK…VQPD) and 129–229 (PPLE…IPSD). A disulfide bond links C36 and C46. A glycan (N-linked (GlcNAc...) asparagine) is linked at N59. C75 and C86 are oxidised to a cystine. An N-linked (GlcNAc...) asparagine glycan is attached at N104. Positions 211 and 212 each coordinate Zn(2+). Positions 215-219 (WSAWS) match the WSXWS motif motif. A glycan (N-linked (GlcNAc...) asparagine) is linked at N233. A helical membrane pass occupies residues 235 to 258 (TTVWISVAVLSAVICLIIVWAVAL). Residues 259–622 (KGYSMVTCIF…DPACFTHSFH (364 aa)) lie on the Cytoplasmic side of the membrane. Positions 267 to 275 (IFPPVPGPK) match the Box 1 motif motif. 3 disordered regions span residues 326–378 (MSVH…YDPE), 461–505 (SSQT…GSAK), and 520–545 (ALSL…NNKE). The span at 466 to 486 (KSREEGKATQQREVESFHSET) shows a compositional bias: basic and acidic residues.

The protein belongs to the type I cytokine receptor family. Type 1 subfamily. In terms of assembly, homodimer upon hormone binding. Interacts with SMARCA1. Interacts with GH1. Interacts with CSH. Interacts with NEK3 and VAV2 and this interaction is prolactin-dependent. In terms of tissue distribution, expressed in breast, placenta, kidney, liver and pancreas.

It is found in the membrane. The protein resides in the secreted. This is a receptor for the anterior pituitary hormone prolactin (PRL). Acts as a prosurvival factor for spermatozoa by inhibiting sperm capacitation through suppression of SRC kinase activation and stimulation of AKT. Isoform 4 is unable to transduce prolactin signaling. Isoform 6 is unable to transduce prolactin signaling. This chain is Prolactin receptor (PRLR), found in Homo sapiens (Human).